The following is a 230-amino-acid chain: Secretory carrier-associated membrane protein 4 (230 aa).

Residues 1-39 (MAGKENNFPPLPPFLPLKPCFYQDFSDEIPVEHQVLVKR) are Cytoplasmic-facing. 4 helical membrane-spanning segments follow: residues 40 to 60 (IYRL…ACLA), 61 to 81 (WWIA…LVLF), 106 to 126 (MTFF…AIGF), and 149 to 169 (VVML…AVTI). Residues 170-230 (VKVHRIYRGA…SYSSSGGHWP (61 aa)) are Cytoplasmic-facing. The residue at position 194 (Thr-194) is a Phosphothreonine.

This sequence belongs to the SCAMP family.

The protein resides in the membrane. In terms of biological role, probably involved in membrane protein trafficking. In Mus musculus (Mouse), this protein is Secretory carrier-associated membrane protein 4 (Scamp4).